Reading from the N-terminus, the 212-residue chain is ER lumen protein-retaining receptor 2 (212 aa).

The Lumenal segment spans residues 1–4; the sequence is MNIF. A helical transmembrane segment spans residues 5 to 24; it reads RLTGDLSHLAAIIILLLKIW. The Cytoplasmic segment spans residues 25-32; sequence KSRSCAGI. Residues 33 to 52 traverse the membrane as a helical segment; sequence SGKSQLLFALVFTTRYLDLF. An interaction with the K-D-E-L motif on target proteins region spans residues 47–48; sequence RY. The Lumenal segment spans residues 53-58; sequence TSFISL. A helical transmembrane segment spans residues 59–79; the sequence is YNTSMKLIYIACSYATVYLIY. At 80–92 the chain is on the cytoplasmic side; it reads MKFKATYDGNHDT. Residues 93 to 110 traverse the membrane as a helical segment; the sequence is FRVEFLIVPVGGLSFLVN. Topologically, residues 111-116 are lumenal; the sequence is HDFSPL. The helical transmembrane segment at 117–135 threads the bilayer; the sequence is EILWTFSIYLESVAILPQL. At 136 to 149 the chain is on the cytoplasmic side; sequence FMISKTGEAETITT. The helical transmembrane segment at 150–168 threads the bilayer; that stretch reads HYLFFLGLYRALYLVNWIW. Residues 159 to 169 are interaction with the K-D-E-L motif on target proteins; that stretch reads RALYLVNWIWR. The Lumenal segment spans residues 169 to 178; the sequence is RYYFEGFFDL. A helical transmembrane segment spans residues 179 to 199; the sequence is IAVVAGVVQTVLYCDFFYLYV. Topologically, residues 200 to 212 are cytoplasmic; sequence TKVLKGKKLSLPA. The important for recycling of cargo proteins with the sequence motif K-D-E-L from the Golgi to the endoplasmic reticulum stretch occupies residues 204-207; that stretch reads KGKK.

The protein belongs to the ERD2 family.

The protein resides in the endoplasmic reticulum membrane. The protein localises to the golgi apparatus membrane. It is found in the cytoplasmic vesicle. Its subcellular location is the COPI-coated vesicle membrane. Its function is as follows. Membrane receptor that binds the K-D-E-L sequence motif in the C-terminal part of endoplasmic reticulum resident proteins and maintains their localization in that compartment by participating to their vesicle-mediated recycling back from the Golgi. Binding is pH dependent, and is optimal at pH 5-5.4. The sequence is that of ER lumen protein-retaining receptor 2 (KDELR2) from Gallus gallus (Chicken).